We begin with the raw amino-acid sequence, 384 residues long: MAKHLFTSESVSEGHPDKIADQISDAVLDAILEQDPKARVACETYVKTGMVMVGGEVTTSAWVDIEEITRKTVRDIGYTHSDMGFDADSCAILNVIGKQSPDINQGVDRADPKEQGAGDQGLMFGYANNETDVLMPAPITYSHKLVKRQSEVRKDKTLPWLRPDAKSQVTFAYNSDGSIAGIDAVVLSTQHSEDVTQADLIEGVMETIIKPVLPAKWLSKDTKYFINPTGRFVIGGPVGDCGLTGRKIIVDTYGGMARHGGGAFSGKDPSKVDRSAAYAARYVAKNIVAAGLADRCEIQVSYAIGVAEPTSISIETFGTAKVGEELLIDLVRRHFDLRPYGLTEMLNLARPIYQATAAYGHFGRNEFPWEATDKVDALRADAGL.

Residue histidine 15 coordinates ATP. Residue aspartate 17 participates in Mg(2+) binding. Residue glutamate 43 participates in K(+) binding. Residues glutamate 56 and glutamine 99 each contribute to the L-methionine site. Residues 99 to 109 are flexible loop; it reads QSPDINQGVDR. Residues 164–166, 231–232, aspartate 240, 246–247, alanine 263, and lysine 267 contribute to the ATP site; these read DAK, RF, and RK. Aspartate 240 is a binding site for L-methionine. Lysine 271 contacts L-methionine.

This sequence belongs to the AdoMet synthase family. As to quaternary structure, homotetramer; dimer of dimers. Requires Mg(2+) as cofactor. K(+) serves as cofactor.

It localises to the cytoplasm. It carries out the reaction L-methionine + ATP + H2O = S-adenosyl-L-methionine + phosphate + diphosphate. Its pathway is amino-acid biosynthesis; S-adenosyl-L-methionine biosynthesis; S-adenosyl-L-methionine from L-methionine: step 1/1. Functionally, catalyzes the formation of S-adenosylmethionine (AdoMet) from methionine and ATP. The overall synthetic reaction is composed of two sequential steps, AdoMet formation and the subsequent tripolyphosphate hydrolysis which occurs prior to release of AdoMet from the enzyme. The protein is S-adenosylmethionine synthase of Shewanella pealeana (strain ATCC 700345 / ANG-SQ1).